We begin with the raw amino-acid sequence, 63 residues long: Keratin-associated protein 19-8 (63 aa).

This sequence belongs to the KRTAP type 19 family. As to quaternary structure, interacts with hair keratins.

In terms of biological role, in the hair cortex, hair keratin intermediate filaments are embedded in an interfilamentous matrix, consisting of hair keratin-associated proteins (KRTAP), which are essential for the formation of a rigid and resistant hair shaft through their extensive disulfide bond cross-linking with abundant cysteine residues of hair keratins. The matrix proteins include the high-sulfur and high-glycine-tyrosine keratins. The polypeptide is Keratin-associated protein 19-8 (KRTAP19-8) (Homo sapiens (Human)).